The following is a 210-amino-acid chain: Methylthioribulose-1-phosphate dehydratase (210 aa).

Residues histidine 94 and histidine 96 each coordinate Zn(2+).

Belongs to the aldolase class II family. MtnB subfamily. It depends on Zn(2+) as a cofactor.

It catalyses the reaction 5-(methylsulfanyl)-D-ribulose 1-phosphate = 5-methylsulfanyl-2,3-dioxopentyl phosphate + H2O. Its pathway is amino-acid biosynthesis; L-methionine biosynthesis via salvage pathway; L-methionine from S-methyl-5-thio-alpha-D-ribose 1-phosphate: step 2/6. Catalyzes the dehydration of methylthioribulose-1-phosphate (MTRu-1-P) into 2,3-diketo-5-methylthiopentyl-1-phosphate (DK-MTP-1-P). The protein is Methylthioribulose-1-phosphate dehydratase of Yersinia enterocolitica serotype O:8 / biotype 1B (strain NCTC 13174 / 8081).